Consider the following 101-residue polypeptide: Small ribosomal subunit protein uS14 (101 aa).

Belongs to the universal ribosomal protein uS14 family. As to quaternary structure, part of the 30S ribosomal subunit. Contacts proteins S3 and S10.

Binds 16S rRNA, required for the assembly of 30S particles and may also be responsible for determining the conformation of the 16S rRNA at the A site. In Baumannia cicadellinicola subsp. Homalodisca coagulata, this protein is Small ribosomal subunit protein uS14.